Consider the following 404-residue polypeptide: p-hydroxybenzoate hydroxylase (404 aa).

Residues glutamate 35, 45 to 50 (RIRAGI), and glutamine 105 each bind FAD. Residues tyrosine 203, 214–216 (SMR), and tyrosine 224 each bind substrate. Aspartate 288 is a binding site for FAD. A substrate-binding site is contributed by proline 295. 301–302 (LN) contacts FAD.

It belongs to the aromatic-ring hydroxylase family. As to quaternary structure, homodimer. Requires FAD as cofactor.

The enzyme catalyses 4-hydroxybenzoate + NADPH + O2 + H(+) = 3,4-dihydroxybenzoate + NADP(+) + H2O. Its pathway is aromatic compound metabolism; benzoate degradation via hydroxylation; 3,4-dihydroxybenzoate from benzoate: step 2/2. Its function is as follows. Catalyzes the incorporation of an atom of dioxygen into p-hydroxybenzoate (p-OHB) to form 3,4-dihydroxybenzoate (3,4DOHB). The reaction occurs in two parts: reduction of the flavin adenine dinucleotide (FAD) in the enzyme by reduced nicotinamide adenine dinucleotide phosphate (NADPH) in response to binding p-hydroxybenzoate to the enzyme and oxidation of reduced FAD with oxygen to form a hydroperoxide, which then oxygenates p-hydroxybenzoate. This chain is p-hydroxybenzoate hydroxylase (pobA), found in Acinetobacter baylyi (strain ATCC 33305 / BD413 / ADP1).